A 35-amino-acid polypeptide reads, in one-letter code: Hemocyanin A chain (35 aa).

The protein belongs to the tyrosinase family. Hemocyanin subfamily. Hemolymph.

It is found in the secreted. The protein resides in the extracellular space. Hemocyanins are copper-containing oxygen carriers occurring freely dissolved in the hemolymph of many mollusks and arthropods. This chain is Hemocyanin A chain, found in Cherax destructor (Common yabby crayfish).